The following is a 78-amino-acid chain: Disintegrin DisBa-01 (78 aa).

The Disintegrin domain maps to 1–78 (GNELLEAGEE…AGCPRNPFHA (78 aa)). Disulfide bonds link Cys-11–Cys-26, Cys-13–Cys-21, Cys-20–Cys-43, Cys-34–Cys-40, Cys-39–Cys-64, and Cys-52–Cys-71. A Cell attachment site motif is present at residues 56 to 58 (RGD).

It belongs to the venom metalloproteinase (M12B) family. P-II subfamily. P-IIa sub-subfamily. In terms of assembly, monomer. As to expression, expressed by the venom gland.

The protein resides in the secreted. This recombinant disintegrin antagonizes integrins alpha-IIb/beta-3 (ITGA2B/ITGB3) and alpha-V/beta-3 (ITGAV/ITGB3). On ITGA2B/ITGB3, it interferes with the outside/-in phosphorylation of the focal adhesion kinase (PTK2 / FAK) downstream of the integrin. It strongly inhibits platelet aggregation induced by ADP, thrombin, and collagen, abolishes and reverses dynamic platelet recruitment to immobilized fibrinogen. In vivo, it induces a dramatic increase in the tail bleeding time, and has a strong antithrombotic activity. On ITGAV/ITGB3, it inhibits the adhesion of ITGAV/ITGB3-expressing human microvascular endothelial cell line and murine melanoma cell line to vitronectin (IC(50) are 555 nM and 225 nM, respectively), and transiently inhibits their proliferation without direct cell toxicity. In vivo, it potently inhibits angiogenesis and metastasis, probably due to its capability to strongly inhibit the expression of VEGF and its receptors in endothelial cells. It also inhibits tumor cell migration in vitro. The protein is Disintegrin DisBa-01 of Bothrops alternatus (Urutu).